Reading from the N-terminus, the 96-residue chain is Mapk-regulated corepressor-interacting protein 1 (96 aa).

Disordered regions lie at residues 1–28 (MASS…GSEI) and 76–96 (AFKP…AKKS). Positions 79 to 83 (PVDLS) match the PXDLS motif motif. Residues 81 to 96 (DLSDLKRRNTQDAKKS) are compositionally biased toward basic and acidic residues.

Belongs to the MCRIP family.

The protein localises to the nucleus. It localises to the cytoplasm. Its subcellular location is the stress granule. Functionally, may play a role in the regulation of the epithelial-mesenchymal transition. In Gallus gallus (Chicken), this protein is Mapk-regulated corepressor-interacting protein 1 (MCRIP1).